Here is a 796-residue protein sequence, read N- to C-terminus: Kinesin-like protein KIF3C (796 aa).

Residues 10-367 (ALKVVARCRP…LRFANRAKNI (358 aa)) form the Kinesin motor domain. An ATP-binding site is contributed by 97 to 104 (GQTGTGKT). Disordered stretches follow at residues 251 to 292 (ERQN…PKEA), 397 to 421 (EKKGMLGKRPRRKSSRRKKAVSAPA), and 754 to 796 (PSTS…VDHD). The segment covering 270 to 284 (AGGGGGGGGTSGSGS) has biased composition (gly residues). Positions 378–632 (KDTLLREFQE…NEQTRELKLK (255 aa)) form a coiled coil. Over residues 401 to 416 (MLGKRPRRKSSRRKKA) the composition is skewed to basic residues. The interval 633–793 (YLIIENFIPP…SAPLHPATVV (161 aa)) is globular.

The protein belongs to the TRAFAC class myosin-kinesin ATPase superfamily. Kinesin family. Kinesin II subfamily. As to quaternary structure, heterodimer of KIF3A and KIF3C.

It is found in the cytoplasm. The protein localises to the cytoskeleton. In terms of biological role, microtubule-based anterograde translocator for membranous organelles. The protein is Kinesin-like protein KIF3C (Kif3c) of Rattus norvegicus (Rat).